Here is a 204-residue protein sequence, read N- to C-terminus: Guanylate kinase (204 aa).

The region spanning 4–182 (GMLVVVSGPS…AVNDLEAVLT (179 aa)) is the Guanylate kinase-like domain. 11–18 (GPSGAGKG) is an ATP binding site.

This sequence belongs to the guanylate kinase family.

It is found in the cytoplasm. It catalyses the reaction GMP + ATP = GDP + ADP. Functionally, essential for recycling GMP and indirectly, cGMP. This is Guanylate kinase from Carboxydothermus hydrogenoformans (strain ATCC BAA-161 / DSM 6008 / Z-2901).